We begin with the raw amino-acid sequence, 578 residues long: Asparagine synthetase [glutamine-hydrolyzing] 2 (578 aa).

Cys2 acts as the For GATase activity in catalysis. One can recognise a Glutamine amidotransferase type-2 domain in the interval 2–185 (CGILAVLGCI…PGHIYSSKQG (184 aa)). L-glutamine is bound by residues 50–54 (RLAII), 75–77 (NGE), and Asp98. Positions 210-450 (LRNAFEKAVI…LPKHILYRQK (241 aa)) constitute an Asparagine synthetase domain. ATP-binding positions include Leu231, Ile267, and 341 to 342 (SG).

Expressed in the vascular region adjacent to leaf mesophyll cells in the companion cell-sieve tube element complex.

It catalyses the reaction L-aspartate + L-glutamine + ATP + H2O = L-asparagine + L-glutamate + AMP + diphosphate + H(+). It functions in the pathway amino-acid biosynthesis; L-asparagine biosynthesis. Essential for nitrogen assimilation, distribution and remobilization within the plant via the phloem. The polypeptide is Asparagine synthetase [glutamine-hydrolyzing] 2 (ASN2) (Arabidopsis thaliana (Mouse-ear cress)).